A 700-amino-acid chain; its full sequence is Receptor-type tyrosine-protein phosphatase epsilon (700 aa).

An N-terminal signal peptide occupies residues 1–19; that stretch reads MEPLCPLLLVGFSLPLARA. Residues 20 to 46 lie on the Extracellular side of the membrane; sequence LRGNETTADSNETTTTSGPPDPGASQP. N-linked (GlcNAc...) asparagine glycosylation is found at asparagine 23 and asparagine 30. Residues 47-69 traverse the membrane as a helical segment; it reads LLAWLLLPLLLLLLVLLLAAYFF. Residues 70–700 are Cytoplasmic-facing; it reads RFRKQRKAVV…DIFSDYANFK (631 aa). Tyrosine-protein phosphatase domains lie at 135 to 394 and 426 to 689; these read FREE…LLEY and LEEE…VQDF. Residues aspartate 303, 335–341, and glutamine 379 contribute to the substrate site; that span reads CSAGVGR. The Phosphocysteine intermediate role is filled by cysteine 335. Residue cysteine 630 is the Phosphocysteine intermediate of the active site. The residue at position 696 (tyrosine 696) is a Phosphotyrosine.

The protein belongs to the protein-tyrosine phosphatase family. Receptor class 4 subfamily. In terms of assembly, monomer. Isoform 2: Homodimer. Can form oligomers. Dimerization is increased by oxidative stress and decreased by EGFR. Isoform 2 interacts with GRB2. Post-translationally, a catalytically active cytoplasmic form (p65) is produced by proteolytic cleavage of either isoform 1, isoform 2 or isoform 3. Isoform 1 and isoform 2 are phosphorylated on tyrosine residues by tyrosine kinase Neu. In terms of processing, isoform 1 is glycosylated. In terms of tissue distribution, expressed in giant cell tumor (osteoclastoma rich in multinucleated osteoclastic cells).

It localises to the cell membrane. Its subcellular location is the cytoplasm. It catalyses the reaction O-phospho-L-tyrosyl-[protein] + H2O = L-tyrosyl-[protein] + phosphate. In terms of biological role, isoform 1 plays a critical role in signaling transduction pathways and phosphoprotein network topology in red blood cells. May play a role in osteoclast formation and function. Functionally, isoform 2 acts as a negative regulator of insulin receptor (IR) signaling in skeletal muscle. Regulates insulin-induced tyrosine phosphorylation of insulin receptor (IR) and insulin receptor substrate 1 (IRS-1), phosphorylation of protein kinase B and glycogen synthase kinase-3 and insulin induced stimulation of glucose uptake. Its function is as follows. Isoform 1 and isoform 2 act as a negative regulator of FceRI-mediated signal transduction leading to cytokine production and degranulation, most likely by acting at the level of SYK to affect downstream events such as phosphorylation of SLP76 and LAT and mobilization of Ca(2+). This chain is Receptor-type tyrosine-protein phosphatase epsilon (PTPRE), found in Homo sapiens (Human).